Reading from the N-terminus, the 500-residue chain is Lysine--tRNA ligase (500 aa).

Glu410 and Glu417 together coordinate Mg(2+).

It belongs to the class-II aminoacyl-tRNA synthetase family. Homodimer. The cofactor is Mg(2+).

Its subcellular location is the cytoplasm. The catalysed reaction is tRNA(Lys) + L-lysine + ATP = L-lysyl-tRNA(Lys) + AMP + diphosphate. This chain is Lysine--tRNA ligase, found in Pseudomonas entomophila (strain L48).